The following is a 74-amino-acid chain: Small ribosomal subunit protein bS18 (74 aa).

It belongs to the bacterial ribosomal protein bS18 family. As to quaternary structure, part of the 30S ribosomal subunit. Forms a tight heterodimer with protein bS6.

Binds as a heterodimer with protein bS6 to the central domain of the 16S rRNA, where it helps stabilize the platform of the 30S subunit. This is Small ribosomal subunit protein bS18 from Rhizorhabdus wittichii (strain DSM 6014 / CCUG 31198 / JCM 15750 / NBRC 105917 / EY 4224 / RW1) (Sphingomonas wittichii).